The sequence spans 177 residues: Prorelaxin (177 aa).

An N-terminal signal peptide occupies residues 1–25 (MLRWFLSHLLGVWLLLSQLPREIPA). 3 disulfide bridges follow: Cys34–Cys164, Cys46–Cys177, and Cys163–Cys168. A propeptide spans 63-149 (QISEPLAEVV…KSLSKLDKHP (87 aa)) (connecting peptide).

The protein belongs to the insulin family. In terms of assembly, heterodimer of a B chain and an A chain linked by two disulfide bonds. As to expression, placenta; syncytiotrophoblast.

Its subcellular location is the secreted. Its function is as follows. Relaxin is an ovarian hormone that acts with estrogen to produce dilatation of the birth canal in many mammals. The chain is Prorelaxin (RLN) from Canis lupus familiaris (Dog).